The following is a 262-amino-acid chain: Global transcriptional regulator CodY (262 aa).

A GAF domain region spans residues 1 to 159; that stretch reads MAHLLEKTRK…ASTVVGIQLL (159 aa). The segment at residues 207–226 is a DNA-binding region (H-T-H motif); it reads ASVIADRIGITRSVIVNALR.

The protein belongs to the CodY family.

Its subcellular location is the cytoplasm. Its function is as follows. DNA-binding global transcriptional regulator which is involved in the adaptive response to starvation and acts by directly or indirectly controlling the expression of numerous genes in response to nutrient availability. During rapid exponential growth, CodY is highly active and represses genes whose products allow adaptation to nutrient depletion. This chain is Global transcriptional regulator CodY, found in Streptococcus pneumoniae (strain ATCC BAA-255 / R6).